Consider the following 2571-residue polypeptide: Stabilin-1 (2571 aa).

Residues 1–25 (MAEPRTLLLLCVLVLCLSDSSFIRG) form the signal peptide. At 26 to 2475 (QTVRSKRCDI…RAVLGSEPPP (2450 aa)) the chain is on the extracellular side. EGF-like domains lie at 111–149 (FECP…SVCQ), 157–194 (FGPD…PHCD), 196–232 (ELPV…NVCL), and 233–272 (APDP…KVCL). Disulfide bonds link cysteine 113-cysteine 127, cysteine 121-cysteine 137, cysteine 139-cysteine 148, cysteine 161-cysteine 172, cysteine 165-cysteine 182, cysteine 184-cysteine 193, cysteine 200-cysteine 211, cysteine 205-cysteine 218, cysteine 220-cysteine 231, cysteine 237-cysteine 248, cysteine 242-cysteine 258, and cysteine 260-cysteine 271. N-linked (GlcNAc...) asparagine glycosylation is found at asparagine 134 and asparagine 142. 7 N-linked (GlcNAc...) asparagine glycosylation sites follow: asparagine 287, asparagine 313, asparagine 416, asparagine 607, asparagine 674, asparagine 713, and asparagine 746. FAS1 domains are found at residues 357 to 495 (YGHL…TALR) and 507 to 642 (KKTV…EGIL). Positions 729–769 (DCTQCPGGFSNPCYGKGNCSDGVRGNGACLCFPDYKGIACH) constitute an EGF-like 5 domain. Cystine bridges form between cysteine 733/cysteine 747, cysteine 741/cysteine 757, and cysteine 759/cysteine 768. Residue asparagine 817 is glycosylated (N-linked (GlcNAc...) asparagine). EGF-like domains are found at residues 819 to 859 (SMGN…NGFS), 862 to 904 (RSNP…RICV), 905 to 947 (AIDE…YECS), and 948 to 987 (PIDP…DGFS). 10 disulfides stabilise this stretch: cysteine 823–cysteine 838, cysteine 832–cysteine 847, cysteine 866–cysteine 880, cysteine 874–cysteine 890, cysteine 892–cysteine 903, cysteine 909–cysteine 923, cysteine 917–cysteine 933, cysteine 935–cysteine 946, cysteine 952–cysteine 965, and cysteine 959–cysteine 975. 2 consecutive FAS1 domains span residues 989 to 1119 (YGDI…SQVL) and 1129 to 1254 (GPGL…SGIL). 7 N-linked (GlcNAc...) asparagine glycosylation sites follow: asparagine 1011, asparagine 1088, asparagine 1097, asparagine 1171, asparagine 1179, asparagine 1223, and asparagine 1275. A Laminin EGF-like 1 domain is found at 1328-1393 (TLCEPCPGGL…CDCDHGLCQE (66 aa)). Cystine bridges form between cysteine 1333–cysteine 1347, cysteine 1341–cysteine 1357, cysteine 1359–cysteine 1368, cysteine 1380–cysteine 1391, cysteine 1384–cysteine 1401, cysteine 1403–cysteine 1412, cysteine 1421–cysteine 1431, cysteine 1425–cysteine 1441, cysteine 1443–cysteine 1454, cysteine 1460–cysteine 1473, cysteine 1467–cysteine 1483, cysteine 1485–cysteine 1496, cysteine 1502–cysteine 1515, cysteine 1509–cysteine 1525, cysteine 1527–cysteine 1539, cysteine 1545–cysteine 1558, cysteine 1552–cysteine 1568, and cysteine 1570–cysteine 1582. Asparagine 1398 carries N-linked (GlcNAc...) asparagine glycosylation. EGF-like domains lie at 1417-1455 (TDHQ…SYCS), 1456-1497 (EVDP…ELCQ), 1498-1540 (EINS…QTCK), and 1541-1583 (LLDP…ITCH). N-linked (GlcNAc...) asparagine glycans are attached at residues asparagine 1450 and asparagine 1472. 2 consecutive FAS1 domains span residues 1583 to 1709 (HGRV…DHVL) and 1725 to 1865 (PQRN…DQLL). Asparagine 1627 and asparagine 1728 each carry an N-linked (GlcNAc...) asparagine glycan. A Laminin EGF-like 2 domain is found at 1966–2031 (INCHACPGGP…RCTQHGRCDE (66 aa)). 17 cysteine pairs are disulfide-bonded: cysteine 1971–cysteine 1985, cysteine 1979–cysteine 1995, cysteine 1997–cysteine 2006, cysteine 2018–cysteine 2029, cysteine 2023–cysteine 2039, cysteine 2041–cysteine 2050, cysteine 2060–cysteine 2070, cysteine 2064–cysteine 2076, cysteine 2078–cysteine 2089, cysteine 2095–cysteine 2108, cysteine 2102–cysteine 2117, cysteine 2119–cysteine 2130, cysteine 2136–cysteine 2150, cysteine 2144–cysteine 2160, cysteine 2162–cysteine 2173, cysteine 2230–cysteine 2299, and cysteine 2254–cysteine 2275. 3 consecutive EGF-like domains span residues 2056–2090 (LQPV…RVCT), 2091–2131 (VADL…WSCR), and 2132–2174 (ARDP…LQCL). N-linked (GlcNAc...) asparagine glycosylation is present at asparagine 2107. The region spanning 2208 to 2301 (GVFHIQATSG…SELWDAYCYR (94 aa)) is the Link domain. N-linked (GlcNAc...) asparagine glycans are attached at residues asparagine 2261, asparagine 2290, asparagine 2334, asparagine 2347, asparagine 2379, asparagine 2393, asparagine 2400, and asparagine 2424. Residues 2322 to 2459 (NGKLLDVLAA…GIIHALASPL (138 aa)) enclose the FAS1 7 domain. Residues 2476-2496 (VALSLGVVVTSGTLLGLVAGA) form a helical membrane-spanning segment. Residues 2497 to 2571 (LYLRARGKPP…PDTQRVLKVK (75 aa)) are Cytoplasmic-facing.

In terms of assembly, interacts with CHID1.

Its subcellular location is the membrane. Its function is as follows. Acts as a scavenger receptor for acetylated low density lipoprotein. Binds to both Gram-positive and Gram-negative bacteria and may play a role in defense against bacterial infection. When inhibited in endothelial tube formation assays, there is a marked decrease in cell-cell interactions, suggesting a role in angiogenesis. Involved in the delivery of newly synthesized CHID1/SI-CLP from the biosynthetic compartment to the endosomal/lysosomal system. The polypeptide is Stabilin-1 (Stab1) (Mus musculus (Mouse)).